The following is a 243-amino-acid chain: 1-(5-phosphoribosyl)-5-[(5-phosphoribosylamino)methylideneamino] imidazole-4-carboxamide isomerase (243 aa).

The Proton acceptor role is filled by Asp8. Residue Asp128 is the Proton donor of the active site.

This sequence belongs to the HisA/HisF family.

The protein resides in the cytoplasm. It carries out the reaction 1-(5-phospho-beta-D-ribosyl)-5-[(5-phospho-beta-D-ribosylamino)methylideneamino]imidazole-4-carboxamide = 5-[(5-phospho-1-deoxy-D-ribulos-1-ylimino)methylamino]-1-(5-phospho-beta-D-ribosyl)imidazole-4-carboxamide. It functions in the pathway amino-acid biosynthesis; L-histidine biosynthesis; L-histidine from 5-phospho-alpha-D-ribose 1-diphosphate: step 4/9. The sequence is that of 1-(5-phosphoribosyl)-5-[(5-phosphoribosylamino)methylideneamino] imidazole-4-carboxamide isomerase from Opitutus terrae (strain DSM 11246 / JCM 15787 / PB90-1).